The primary structure comprises 156 residues: uncharacterized protein (156 aa).

3 helical membrane passes run 21–41, 54–74, and 80–100; these read GVLF…AISL, TICS…IDFA, and SVLV…WALF.

The protein localises to the membrane. This is an uncharacterized protein from Saccharomyces cerevisiae (strain ATCC 204508 / S288c) (Baker's yeast).